The sequence spans 159 residues: Ribosomal RNA large subunit methyltransferase H (159 aa).

S-adenosyl-L-methionine-binding positions include Leu76, Gly108, and 127 to 132; that span reads FGQLTL.

It belongs to the RNA methyltransferase RlmH family. As to quaternary structure, homodimer.

The protein localises to the cytoplasm. The catalysed reaction is pseudouridine(1915) in 23S rRNA + S-adenosyl-L-methionine = N(3)-methylpseudouridine(1915) in 23S rRNA + S-adenosyl-L-homocysteine + H(+). In terms of biological role, specifically methylates the pseudouridine at position 1915 (m3Psi1915) in 23S rRNA. This is Ribosomal RNA large subunit methyltransferase H from Streptococcus suis (strain 05ZYH33).